The sequence spans 199 residues: Pyridoxal 5'-phosphate synthase subunit PdxT (199 aa).

An L-glutamine-binding site is contributed by 49-51; sequence GES. The active-site Nucleophile is Cys-81. L-glutamine-binding positions include Arg-110 and 139-140; that span reads IR. Catalysis depends on charge relay system residues His-175 and Glu-177.

It belongs to the glutaminase PdxT/SNO family. In terms of assembly, in the presence of PdxS, forms a dodecamer of heterodimers. Only shows activity in the heterodimer.

The enzyme catalyses aldehydo-D-ribose 5-phosphate + D-glyceraldehyde 3-phosphate + L-glutamine = pyridoxal 5'-phosphate + L-glutamate + phosphate + 3 H2O + H(+). The catalysed reaction is L-glutamine + H2O = L-glutamate + NH4(+). The protein operates within cofactor biosynthesis; pyridoxal 5'-phosphate biosynthesis. Catalyzes the hydrolysis of glutamine to glutamate and ammonia as part of the biosynthesis of pyridoxal 5'-phosphate. The resulting ammonia molecule is channeled to the active site of PdxS. This is Pyridoxal 5'-phosphate synthase subunit PdxT from Frankia alni (strain DSM 45986 / CECT 9034 / ACN14a).